The primary structure comprises 540 residues: FAD-binding monooxygenase lolF2 (540 aa).

FAD is bound by residues 43–46 (VWRE) and 55–58 (DSLF). NADP(+)-binding positions include 53 to 55 (AVD), 182 to 188 (TGPSGVQ), and 205 to 206 (QS).

This sequence belongs to the FAD-binding monooxygenase family. It depends on FAD as a cofactor.

It participates in alkaloid biosynthesis. Its function is as follows. FAD-binding monooxygenase; part of the gene cluster that mediates the biosynthesis of loline alkaloids, potent insecticidal agents composed of a pyrrolizidine ring system and an uncommon ether bridge linking carbons 2 and 7. Lolines are structurally differentiated by the various modifications of the L-amino group and include norloline, loline, N-methylloline, N-acetylloline, N-acetylnorloline, and N-formylloline. The first committed step is the condensation of O-acetyl-L-homoserine (derived from L-aspartic acid) and L-proline, probably catalyzed by the gamma-type pyridoxal 5'-phosphate(PLP)-dependent enzyme lolC, to give the diamino diacid, NACPP. Ensuing cyclization, decarboxylation, and acetylation steps yield 1-exo-acetamidopyrrolizidine (AcAP). LolO is required for installation of the ether bridge upon the pathway intermediate, 1-exo-acetamidopyrrolizidine (AcAP). In sequential 2-oxoglutarate- and O(2)-consuming steps, lolO removes hydrogens from C2 and C7 of AcAP to form both carbon-oxygen bonds in N-acetylnorloline (NANL), the precursor to all other lolines. The enzymes lolD, lolE, lolF and lolT have also been proposed to be involved in the ether-bridge installation. Further processing of the exocyclic moiety of NANL by fungal N-acetamidase (LolN), methyltransferase (LolM), and cytochrome P450 (LolP) enzymes, with occasional involvement of a plant acetyltransferase, generates the other known lolines. LolN transforms NANL to norlonine which is monomethylated and dimethylated to respectively lonine and N-methyllonine (NML) by lolM. LolP catalyzes hydroxylation of the methyl group in N-methylloline (NML) and further oxygenation to N-formylloline (NFL). A plant acetyltransferase is responsible for the acetylation of loline to form N-acetylloline (NAL). LolA might interact with aspartate kinase to prevent feedback inhibition of its activity by these end products and thereby promote production of l-homoserine from l-aspartate. This chain is FAD-binding monooxygenase lolF2, found in Epichloe uncinata (Endophyte fungus).